The following is an 880-amino-acid chain: Alanine--tRNA ligase (880 aa).

It belongs to the class-II aminoacyl-tRNA synthetase family.

It is found in the cytoplasm. It catalyses the reaction tRNA(Ala) + L-alanine + ATP = L-alanyl-tRNA(Ala) + AMP + diphosphate. In terms of biological role, catalyzes the attachment of alanine to tRNA(Ala) in a two-step reaction: alanine is first activated by ATP to form Ala-AMP and then transferred to the acceptor end of tRNA(Ala). Also edits incorrectly charged Ser-tRNA(Ala) and Gly-tRNA(Ala) via its editing domain. The polypeptide is Alanine--tRNA ligase (alaS) (Lactiplantibacillus plantarum (strain ATCC BAA-793 / NCIMB 8826 / WCFS1) (Lactobacillus plantarum)).